Here is a 496-residue protein sequence, read N- to C-terminus: Probable serine/threonine-protein kinase DDB_G0284251 (496 aa).

Residues 1-13 show a composition bias toward low complexity; sequence MIEINNNHNNGNG. The interval 1-25 is disordered; that stretch reads MIEINNNHNNGNGKQFPSSQIMPDS. The Protein kinase domain occupies 36–288; it reads YTLGEKIGRG…AQELLQHPIF (253 aa). ATP contacts are provided by residues 42 to 50 and Lys-65; that span reads IGRGAFGQV. The active-site Proton acceptor is Asp-158. The tract at residues 323-345 is disordered; it reads DWGSSSSTSGSSTPLSSSSSSSN. A coiled-coil region spans residues 353–386; sequence EDFNKLQTTIKQQAQTISNLSEEILILKKELKEK. The interval 454–496 is disordered; sequence PQLTPSSSRENISLSNSSSSIPNPNQNQNQNNKSKSKKFGFFS. Low complexity predominate over residues 458–486; the sequence is PSSSRENISLSNSSSSIPNPNQNQNQNNK. The segment covering 487 to 496 has biased composition (basic residues); the sequence is SKSKKFGFFS.

Belongs to the protein kinase superfamily. STE Ser/Thr protein kinase family. Mg(2+) serves as cofactor.

It catalyses the reaction L-seryl-[protein] + ATP = O-phospho-L-seryl-[protein] + ADP + H(+). The enzyme catalyses L-threonyl-[protein] + ATP = O-phospho-L-threonyl-[protein] + ADP + H(+). The sequence is that of Probable serine/threonine-protein kinase DDB_G0284251 from Dictyostelium discoideum (Social amoeba).